Reading from the N-terminus, the 156-residue chain is Ribosomal RNA large subunit methyltransferase H (156 aa).

S-adenosyl-L-methionine contacts are provided by residues L73, G104, and 123–128 (LSALTL).

It belongs to the RNA methyltransferase RlmH family. Homodimer.

It is found in the cytoplasm. The catalysed reaction is pseudouridine(1915) in 23S rRNA + S-adenosyl-L-methionine = N(3)-methylpseudouridine(1915) in 23S rRNA + S-adenosyl-L-homocysteine + H(+). Its function is as follows. Specifically methylates the pseudouridine at position 1915 (m3Psi1915) in 23S rRNA. The polypeptide is Ribosomal RNA large subunit methyltransferase H (Shewanella sp. (strain ANA-3)).